A 183-amino-acid polypeptide reads, in one-letter code: uncharacterized protein (183 aa).

A signal peptide spans 1–23 (MSAFKKSLLVAGVAMILSNNVFA). The cysteines at positions 41 and 80 are disulfide-linked.

Belongs to the fimbrial protein family.

The protein localises to the fimbrium. This is an uncharacterized protein from Escherichia coli (strain K12).